Consider the following 38-residue polypeptide: Photosystem II reaction center protein L (38 aa).

A helical transmembrane segment spans residues 17–37; sequence SLYWGLLLIFVLAILFSNYIF.

This sequence belongs to the PsbL family. In terms of assembly, PSII is composed of 1 copy each of membrane proteins PsbA, PsbB, PsbC, PsbD, PsbE, PsbF, PsbH, PsbI, PsbJ, PsbK, PsbL, PsbM, PsbT, PsbX, PsbY, PsbZ, Psb30/Ycf12, at least 3 peripheral proteins of the oxygen-evolving complex and a large number of cofactors. It forms dimeric complexes.

It is found in the plastid. The protein resides in the chloroplast thylakoid membrane. In terms of biological role, one of the components of the core complex of photosystem II (PSII). PSII is a light-driven water:plastoquinone oxidoreductase that uses light energy to abstract electrons from H(2)O, generating O(2) and a proton gradient subsequently used for ATP formation. It consists of a core antenna complex that captures photons, and an electron transfer chain that converts photonic excitation into a charge separation. This subunit is found at the monomer-monomer interface and is required for correct PSII assembly and/or dimerization. This Chlorokybus atmophyticus (Soil alga) protein is Photosystem II reaction center protein L.